The following is a 648-amino-acid chain: Fidgetin-like protein 2 (648 aa).

Residues 1 to 36 (MHWTPEHAQPLNQWPEQHLDVSSTTPSPAHKLELPP) are disordered. A compositionally biased stretch (polar residues) spans 10-27 (PLNQWPEQHLDVSSTTPS). Residues Ala-394 and 434–439 (GCGKAL) each bind ATP.

The protein belongs to the AAA ATPase family. Mg(2+) is required as a cofactor.

It is found in the cytoplasm. It localises to the cell cortex. The enzyme catalyses ATP + H2O = ADP + phosphate + H(+). Microtubule-severing enzyme that negatively regulates cell migration and wound healing. In migrating cells, targets dynamic microtubules (MTs) at the leading edge and severs them, thereby suppressing motility. Microtubule severing releases ARHGEF2 which activates RHOA, which in turn regulates focal ahesion turnover via focal adhesion kinase, as opposed to F-actin polymerization, to suppress cell motility. Negative regulator of axon regeneration that suppresses axonal growth by selectively severing dynamic MTs in the distal axon shaft and growth cone. Contributes to proper cell branching during endothelial and neuronal development. The sequence is that of Fidgetin-like protein 2 (Fignl2) from Rattus norvegicus (Rat).